A 434-amino-acid polypeptide reads, in one-letter code: Tol-Pal system protein TolB (434 aa).

The signal sequence occupies residues 1–21 (MTVRRALALAALALAVSPALA). The interval 411–434 (GDRQTPVTSGKTDLAAPAWGPLAP) is disordered.

Belongs to the TolB family. In terms of assembly, the Tol-Pal system is composed of five core proteins: the inner membrane proteins TolA, TolQ and TolR, the periplasmic protein TolB and the outer membrane protein Pal. They form a network linking the inner and outer membranes and the peptidoglycan layer.

It localises to the periplasm. Functionally, part of the Tol-Pal system, which plays a role in outer membrane invagination during cell division and is important for maintaining outer membrane integrity. The sequence is that of Tol-Pal system protein TolB from Anaeromyxobacter dehalogenans (strain 2CP-1 / ATCC BAA-258).